Consider the following 828-residue polypeptide: Periplasmic nitrate reductase (828 aa).

Residues 1–31 (MKLSRRSFMKANAVAAAAAAAGLSVPGVARA) constitute a signal peptide (tat-type signal). The 4Fe-4S Mo/W bis-MGD-type domain maps to 39–95 (IKWDKAPCRFCGTGCGVLVGTQQGRVVACQGDPDAPVNRGLNCIKGYFLPKIMYGKD). [4Fe-4S] cluster-binding residues include cysteine 46, cysteine 49, cysteine 53, and cysteine 81. Residues lysine 83, glutamine 150, asparagine 175, cysteine 179, 212-219 (WGSNMAEM), 243-247 (STYQH), 262-264 (QSD), methionine 372, glutamine 376, asparagine 482, 508-509 (SD), lysine 531, aspartate 558, and 718-727 (TGRVLEHWHT) each bind Mo-bis(molybdopterin guanine dinucleotide). Phenylalanine 794 serves as a coordination point for substrate. Residues asparagine 802 and lysine 819 each coordinate Mo-bis(molybdopterin guanine dinucleotide).

It belongs to the prokaryotic molybdopterin-containing oxidoreductase family. NasA/NapA/NarB subfamily. Component of the periplasmic nitrate reductase NapAB complex composed of NapA and NapB. [4Fe-4S] cluster serves as cofactor. Requires Mo-bis(molybdopterin guanine dinucleotide) as cofactor. Predicted to be exported by the Tat system. The position of the signal peptide cleavage has not been experimentally proven.

It is found in the periplasm. It carries out the reaction 2 Fe(II)-[cytochrome] + nitrate + 2 H(+) = 2 Fe(III)-[cytochrome] + nitrite + H2O. Catalytic subunit of the periplasmic nitrate reductase complex NapAB. Receives electrons from NapB and catalyzes the reduction of nitrate to nitrite. The protein is Periplasmic nitrate reductase of Escherichia coli O81 (strain ED1a).